A 708-amino-acid chain; its full sequence is Ion-translocating oxidoreductase complex subunit C (708 aa).

4Fe-4S ferredoxin-type domains lie at G369 to Y397 and K407 to F436. The [4Fe-4S] cluster site is built by C377, C380, C383, C387, C416, C419, C422, and C426. Positions A630 to P682 are disordered.

This sequence belongs to the 4Fe4S bacterial-type ferredoxin family. RnfC subfamily. As to quaternary structure, the complex is composed of six subunits: RsxA, RsxB, RsxC, RsxD, RsxE and RsxG. [4Fe-4S] cluster is required as a cofactor.

It is found in the cell inner membrane. Functionally, part of a membrane-bound complex that couples electron transfer with translocation of ions across the membrane. Required to maintain the reduced state of SoxR. The chain is Ion-translocating oxidoreductase complex subunit C from Escherichia coli (strain UTI89 / UPEC).